The sequence spans 672 residues: ABC transporter G family member 21 (672 aa).

The span at 1-35 (MMPPNEQESSFPKTPSANRHETSPVQENRFSSPSH) shows a compositional bias: polar residues. The segment at 1–59 (MMPPNEQESSFPKTPSANRHETSPVQENRFSSPSHVNPCLDDDNDHDGPSHQSRQSSVL) is disordered. Over residues 50 to 59 (SHQSRQSSVL) the composition is skewed to low complexity. Positions 68–322 (LKFEELTYSI…FGSIGYQPGS (255 aa)) constitute an ABC transporter domain. 117-124 (GPSGSGKT) lines the ATP pocket. Residues 411–617 (MQFSVLLKRG…CYKLLVGVQY (207 aa)) enclose the ABC transmembrane type-2 domain. 6 helical membrane passes run 429-449 (FSGL…LLWW), 460-480 (VGLL…NAIF), 512-532 (LPME…MGGL), 543-563 (LMIV…LGAI), 576-596 (VLML…PGFI), and 649-669 (WDVL…YLAL).

Belongs to the ABC transporter superfamily. ABCG family. Eye pigment precursor importer (TC 3.A.1.204) subfamily.

It is found in the membrane. This is ABC transporter G family member 21 (ABCG21) from Arabidopsis thaliana (Mouse-ear cress).